The sequence spans 197 residues: 3-isopropylmalate dehydratase small subunit (197 aa).

This sequence belongs to the LeuD family. LeuD type 1 subfamily. In terms of assembly, heterodimer of LeuC and LeuD.

The enzyme catalyses (2R,3S)-3-isopropylmalate = (2S)-2-isopropylmalate. It functions in the pathway amino-acid biosynthesis; L-leucine biosynthesis; L-leucine from 3-methyl-2-oxobutanoate: step 2/4. Catalyzes the isomerization between 2-isopropylmalate and 3-isopropylmalate, via the formation of 2-isopropylmaleate. This is 3-isopropylmalate dehydratase small subunit from Acidothermus cellulolyticus (strain ATCC 43068 / DSM 8971 / 11B).